A 218-amino-acid polypeptide reads, in one-letter code: Runt-related transcription factor 2 (218 aa).

Residues 67 to 195 (RGHKFYLEKK…TVDGPREPRR (129 aa)) enclose the Runt domain. The tract at residues 122–138 (VMAGNDENYSAELRNAS) is required for interaction with FOXO1. The tract at residues 189-218 (GPREPRRHRQKLDDSKPSLFSDRLSDLGRI) is disordered. A Glycyl lysine isopeptide (Lys-Gly) (interchain with G-Cter in SUMO2) cross-link involves residue Lys204.

Heterodimer of an alpha and a beta subunit. The alpha subunit binds DNA as a monomer and through the Runt domain. DNA-binding is increased by heterodimerization. Interacts with XRCC6 (Ku70) and XRCC5 (Ku80). Interacts with CCNB1, KAT6A and KAT6B. Interacts with HIVEP3. Interacts with IFI204. Interaction with SATB2; the interaction results in enhanced DNA binding and transactivation by these transcription factors. Binds to HIPK3. Interacts with FOXO1 (via a C-terminal region); the interaction inhibits RUNX2 transcriptional activity towards BGLAP. Interacts with FOXP3. Interacts with TMEM119. Interacts with OLFM2. Interacts with IPO7; the interaction inhibits RUNX2 nuclear translocation in osteoblasts. Phosphorylated; probably by MAP kinases (MAPK). Phosphorylation by HIPK3 is required for the SPEN/MINT and FGF2 transactivation during osteoblastic differentiation.

It is found in the nucleus. The protein localises to the cytoplasm. Transcription factor involved in osteoblastic differentiation and skeletal morphogenesis. Essential for the maturation of osteoblasts and both intramembranous and endochondral ossification. CBF binds to the core site, 5'-PYGPYGGT-3', of a number of enhancers and promoters, including murine leukemia virus, polyomavirus enhancer, T-cell receptor enhancers, osteocalcin, osteopontin, bone sialoprotein, alpha 1(I) collagen, LCK, IL-3 and GM-CSF promoters. Inhibits KAT6B-dependent transcriptional activation. In osteoblasts, supports transcription activation: synergizes with SPEN/MINT to enhance FGFR2-mediated activation of the osteocalcin FGF-responsive element (OCFRE). The chain is Runt-related transcription factor 2 (Runx2) from Rattus norvegicus (Rat).